The sequence spans 298 residues: GTP-binding protein REM 1 (298 aa).

Residues 1-73 (MTLNTEQEAK…DDWSSESSDS (73 aa)) are disordered. Residues 35 to 55 (TVPSTQSQHPRLGQSASLNPP) show a composition bias toward polar residues. Ser51 carries the phosphoserine modification. A compositionally biased stretch (low complexity) spans 63–73 (PDDWSSESSDS). Residues 87-94 (GDPGVGKT) and 195-198 (NKAD) contribute to the GTP site. The calmodulin-binding stretch occupies residues 268–287 (ARRFLARLTARSARRRALKA).

This sequence belongs to the small GTPase superfamily. RGK family. In terms of assembly, in vitro, interacts with calmodulin in a calcium-dependent manner. Most highly expressed in the endothelial lining of the blood vessels in uterus and heart. Lower levels found in spleen, lymph node, kidney and testis. Also found in cells with secretory function such as the islets of Langerhans, lobule/duct epithelium in the breast, bile duct epithelium in the liver, surface epithelium in the endometrial glands of the uterus, colon mucosa and acinar cells in the pancreas and the prostate.

In terms of biological role, promotes endothelial cell sprouting and actin cytoskeletal reorganization. May be involved in angiogenesis. May function in Ca(2+) signaling. The chain is GTP-binding protein REM 1 (REM1) from Homo sapiens (Human).